A 395-amino-acid polypeptide reads, in one-letter code: Flap endonuclease 1 (395 aa).

An N-domain region spans residues 1–108; it reads MGILGLSKLL…DELEMRRQKA (108 aa). Residue aspartate 34 coordinates Mg(2+). Arginine 74 is a binding site for DNA. Aspartate 90 contributes to the Mg(2+) binding site. Residues 116-136 are disordered; the sequence is EKAKDAGDDEMMEKMSKRTVR. Residues 126–257 are I-domain; it reads MMEKMSKRTV…QKAWEGIQRY (132 aa). Mg(2+) contacts are provided by glutamate 162, glutamate 164, aspartate 183, and aspartate 185. DNA is bound at residue glutamate 162. Glycine 235 and aspartate 237 together coordinate DNA. Aspartate 237 serves as a coordination point for Mg(2+). The interaction with PCNA stretch occupies residues 340–348; that stretch reads TQGRLDSFF.

This sequence belongs to the XPG/RAD2 endonuclease family. FEN1 subfamily. As to quaternary structure, interacts with PCNA. Three molecules of FEN1 bind to one PCNA trimer with each molecule binding to one PCNA monomer. PCNA stimulates the nuclease activity without altering cleavage specificity. Mg(2+) is required as a cofactor. Post-translationally, phosphorylated. Phosphorylation upon DNA damage induces relocalization to the nuclear plasma.

It localises to the nucleus. It is found in the nucleolus. The protein localises to the nucleoplasm. Its subcellular location is the mitochondrion. Structure-specific nuclease with 5'-flap endonuclease and 5'-3' exonuclease activities involved in DNA replication and repair. During DNA replication, cleaves the 5'-overhanging flap structure that is generated by displacement synthesis when DNA polymerase encounters the 5'-end of a downstream Okazaki fragment. It enters the flap from the 5'-end and then tracks to cleave the flap base, leaving a nick for ligation. Also involved in the long patch base excision repair (LP-BER) pathway, by cleaving within the apurinic/apyrimidinic (AP) site-terminated flap. Acts as a genome stabilization factor that prevents flaps from equilibrating into structures that lead to duplications and deletions. Also possesses 5'-3' exonuclease activity on nicked or gapped double-stranded DNA, and exhibits RNase H activity. Also involved in replication and repair of rDNA and in repairing mitochondrial DNA. The protein is Flap endonuclease 1 of Leishmania major.